We begin with the raw amino-acid sequence, 458 residues long: UPF0210 protein MmarC5_0151 (458 aa).

Belongs to the UPF0210 family.

This Methanococcus maripaludis (strain C5 / ATCC BAA-1333) protein is UPF0210 protein MmarC5_0151.